Reading from the N-terminus, the 149-residue chain is Urease accessory protein UreE (149 aa).

It belongs to the UreE family.

The protein resides in the cytoplasm. In terms of biological role, involved in urease metallocenter assembly. Binds nickel. Probably functions as a nickel donor during metallocenter assembly. In Ureaplasma parvum serovar 3 (strain ATCC 700970), this protein is Urease accessory protein UreE.